A 279-amino-acid chain; its full sequence is MALLTAKRPKKEAAPATDTSNNESDSEDSQNVDGDTGANAGWADCIGKVLKSKSVGPTVLSRAKKNPAVVRSKTSEAAKKPGFDFEVVGGDVKEEDDDDEEDGDADKSALDATLTKTERRNVPLQLRVKPSYQDLERERTLRKVATRGVVQFFNAVRIQQKDLEQQLADAGPLDSRQDAVLNNINKRKFLDVLMSGKRAKSTAIDNAVKKEEQETDDDDEDDTAEASSTGKKKSEWNVLREDFMTNKKIKHWDEEDDEGSDQGANNDEADDSDDDDEED.

Disordered stretches follow at residues 1-40 (MALL…GANA), 56-120 (GPTV…TERR), and 200-279 (KSTA…DEED). Basic and acidic residues predominate over residues 73 to 83 (KTSEAAKKPGF). Acidic residues-rich tracts occupy residues 93–104 (KEEDDDDEEDGD) and 213–224 (QETDDDDEDDTA). Residues 232–245 (KKSEWNVLREDFMT) show a composition bias toward basic and acidic residues. A compositionally biased stretch (acidic residues) spans 267–279 (DEADDSDDDDEED).

It belongs to the RRP15 family.

This chain is RRP15-like protein, found in Drosophila pseudoobscura pseudoobscura (Fruit fly).